Consider the following 513-residue polypeptide: Secreted LysM effector Vd6LysM (513 aa).

Positions 1 to 19 (MSFIKSLLLAAAAVASVSA) are cleaved as a signal peptide. LysM domains are found at residues 38–85 (SYWV…SYCV), 136–182 (KFHW…NVCV), 219–265 (KFHW…QVCV), and 302–348 (KFHW…QVCV). Residues 357–367 (TTTRPPTTTAP) show a composition bias toward low complexity. The segment at 357-377 (TTTRPPTTTAPGNGVSTPQPT) is disordered. 2 LysM domains span residues 387–433 (KFHW…NVCV) and 465–511 (KFHW…NVCV).

It belongs to the secreted LysM effector family.

Might have a role in sequestration of chitin oligosaccharides (breakdown products of fungal cell walls that are released during invasion and act as triggers of host immunity) to dampen host defense. Does not play an important role during host colonization. In Verticillium dahliae (strain VdLs.17 / ATCC MYA-4575 / FGSC 10137) (Verticillium wilt), this protein is Secreted LysM effector Vd6LysM.